The chain runs to 622 residues: Histone-arginine methyltransferase CARMER (622 aa).

Positions 118–425 (ASQYFQFYGY…QRQSYDVEID (308 aa)) constitute an SAM-dependent MTase PRMT-type domain. 6 residues coordinate S-adenosyl-L-methionine: Q131, R140, G164, E186, E215, and T243. An Asymmetric dimethylarginine; by autocatalysis modification is found at R478. Disordered stretches follow at residues 513 to 556 (ANGG…QQQQ) and 602 to 622 (QPIL…NQFY). Residues 536–556 (QQQQQQQQQQQQAAVGPQQQQ) show a composition bias toward low complexity.

This sequence belongs to the class I-like SAM-binding methyltransferase superfamily. Protein arginine N-methyltransferase family. As to quaternary structure, homodimer. The dimethylated protein is the major form.

Its subcellular location is the cytoplasm. It localises to the nucleus. It carries out the reaction L-arginyl-[protein] + 2 S-adenosyl-L-methionine = N(omega),N(omega)-dimethyl-L-arginyl-[protein] + 2 S-adenosyl-L-homocysteine + 2 H(+). Functionally, methylates (mono- and asymmetric dimethylation) the guanidino nitrogens of arginyl residues in proteins. May methylate histone H3 at 'Arg-17' and activate transcription via chromatin remodeling. This Anopheles gambiae (African malaria mosquito) protein is Histone-arginine methyltransferase CARMER.